The primary structure comprises 714 residues: Structure-specific endonuclease subunit SLX4 1 (714 aa).

Basic and acidic residues-rich tracts occupy residues 1-14 (MSPE…EDNL) and 24-34 (IHEETLAEESH). 2 disordered regions span residues 1–116 (MSPE…QGSI) and 337–369 (DSSG…KTPQ). A compositionally biased stretch (low complexity) spans 36–46 (QSIQRSISRLS). Residues 79–92 (KTKKRKLKVSKPRK) show a composition bias toward basic residues.

Belongs to the SLX4 family. Forms a heterodimer with SLX1. In terms of processing, phosphorylated in response to DNA damage.

Its subcellular location is the nucleus. Its function is as follows. Regulatory subunit of the SLX1-SLX4 structure-specific endonuclease that resolves DNA secondary structures generated during DNA repair and recombination. Has endonuclease activity towards branched DNA substrates, introducing single-strand cuts in duplex DNA close to junctions with ss-DNA. This chain is Structure-specific endonuclease subunit SLX4 1, found in Candida tropicalis (strain ATCC MYA-3404 / T1) (Yeast).